We begin with the raw amino-acid sequence, 151 residues long: uncharacterized protein (151 aa).

This sequence to equivalent protein in phage 82.

This is an uncharacterized protein from Escherichia coli (strain K12).